Consider the following 269-residue polypeptide: Formamidopyrimidine-DNA glycosylase (269 aa).

Proline 2 functions as the Schiff-base intermediate with DNA in the catalytic mechanism. Glutamate 3 serves as the catalytic Proton donor. The active-site Proton donor; for beta-elimination activity is the lysine 57. DNA is bound by residues histidine 90, arginine 109, and lysine 150. Residues 235 to 269 (QVYGRKGEPCRVCGTPIVATKHAQRATFYCRQCQK) form an FPG-type zinc finger. The Proton donor; for delta-elimination activity role is filled by arginine 259.

Belongs to the FPG family. In terms of assembly, monomer. It depends on Zn(2+) as a cofactor.

The catalysed reaction is Hydrolysis of DNA containing ring-opened 7-methylguanine residues, releasing 2,6-diamino-4-hydroxy-5-(N-methyl)formamidopyrimidine.. The enzyme catalyses 2'-deoxyribonucleotide-(2'-deoxyribose 5'-phosphate)-2'-deoxyribonucleotide-DNA = a 3'-end 2'-deoxyribonucleotide-(2,3-dehydro-2,3-deoxyribose 5'-phosphate)-DNA + a 5'-end 5'-phospho-2'-deoxyribonucleoside-DNA + H(+). Involved in base excision repair of DNA damaged by oxidation or by mutagenic agents. Acts as a DNA glycosylase that recognizes and removes damaged bases. Has a preference for oxidized purines, such as 7,8-dihydro-8-oxoguanine (8-oxoG). Has AP (apurinic/apyrimidinic) lyase activity and introduces nicks in the DNA strand. Cleaves the DNA backbone by beta-delta elimination to generate a single-strand break at the site of the removed base with both 3'- and 5'-phosphates. This chain is Formamidopyrimidine-DNA glycosylase, found in Escherichia coli O6:K15:H31 (strain 536 / UPEC).